We begin with the raw amino-acid sequence, 220 residues long: Imidazoleglycerol-phosphate dehydratase (220 aa).

Substrate is bound by residues Glu-14, 64–72, 90–94, Arg-116, and Arg-138; these read HMIHALAKH and HHTTE. Mn(2+) contacts are provided by His-64, His-90, His-91, and Glu-94. Mn(2+) contacts are provided by His-162, His-186, His-187, and Glu-190. Residues 186 to 194 and 214 to 216 each bind substrate; these read HHRSESAFK and STK.

Belongs to the imidazoleglycerol-phosphate dehydratase family. Requires Mn(2+) as cofactor.

The catalysed reaction is D-erythro-1-(imidazol-4-yl)glycerol 3-phosphate = 3-(imidazol-4-yl)-2-oxopropyl phosphate + H2O. It participates in amino-acid biosynthesis; L-histidine biosynthesis; L-histidine from 5-phospho-alpha-D-ribose 1-diphosphate: step 6/9. The sequence is that of Imidazoleglycerol-phosphate dehydratase from Saccharomyces cerevisiae (strain ATCC 204508 / S288c) (Baker's yeast).